Consider the following 76-residue polypeptide: Putative membrane protein insertion efficiency factor (76 aa).

Belongs to the UPF0161 family.

Its subcellular location is the cell inner membrane. Could be involved in insertion of integral membrane proteins into the membrane. The polypeptide is Putative membrane protein insertion efficiency factor (Anaeromyxobacter dehalogenans (strain 2CP-C)).